The following is a 62-amino-acid chain: Large ribosomal subunit protein bL33 (62 aa).

It belongs to the bacterial ribosomal protein bL33 family.

The sequence is that of Large ribosomal subunit protein bL33 from Bacteroides thetaiotaomicron (strain ATCC 29148 / DSM 2079 / JCM 5827 / CCUG 10774 / NCTC 10582 / VPI-5482 / E50).